Consider the following 478-residue polypeptide: Adenosylhomocysteinase (478 aa).

Positions 57, 139, and 201 each coordinate substrate. Thr202–Thr204 contacts NAD(+). Residues Lys231 and Asp235 each contribute to the substrate site. Residues Asn236, Gly265–Gly270, Glu288, Asn323, Ile344–His346, and Asn392 each bind NAD(+).

The protein belongs to the adenosylhomocysteinase family. NAD(+) is required as a cofactor.

Its subcellular location is the cytoplasm. The enzyme catalyses S-adenosyl-L-homocysteine + H2O = L-homocysteine + adenosine. Its pathway is amino-acid biosynthesis; L-homocysteine biosynthesis; L-homocysteine from S-adenosyl-L-homocysteine: step 1/1. In terms of biological role, may play a key role in the regulation of the intracellular concentration of adenosylhomocysteine. This chain is Adenosylhomocysteinase, found in Corynebacterium efficiens (strain DSM 44549 / YS-314 / AJ 12310 / JCM 11189 / NBRC 100395).